A 300-amino-acid polypeptide reads, in one-letter code: MGPYLSQPKRDKTTTTGQGKSVIFAASEMQGWRNTMEDAHIHRPDIIQDVSVFGVFDGHGGREVAQFVEKHFVDELLKNKNFKEQKFEEALKETFLKMDELLLTPEGQKELNQYKATDTDESYAGCTANVALIYKNTLYVANAGDSRSVLCRNNTNHDMSVDHKPDNPEEKSRIERAGGFVSDGRVNGNLNLSRALGDLEYKRDNKLRSNEQLIIALPDVKKTELTPQDKFILMGCDGVFETLNHQELLKQVNSTIGQAQVTEELLKKAAEDLLDQLLAPDTSQGTGCDNMTTILVYLRR.

One can recognise a PPM-type phosphatase domain in the interval 23 to 298 (IFAASEMQGW…DNMTTILVYL (276 aa)). The Mn(2+) site is built by aspartate 57, glycine 58, aspartate 237, and aspartate 289.

Belongs to the PP2C family. Mg(2+) serves as cofactor. It depends on Mn(2+) as a cofactor. The N-terminus is blocked.

It localises to the membrane. It catalyses the reaction O-phospho-L-seryl-[protein] + H2O = L-seryl-[protein] + phosphate. It carries out the reaction O-phospho-L-threonyl-[protein] + H2O = L-threonyl-[protein] + phosphate. Functionally, serine and threonine phosphatase. This Paramecium tetraurelia protein is Protein phosphatase 2C 1.